We begin with the raw amino-acid sequence, 326 residues long: Putative GTPase CC_2483 (326 aa).

GTP-binding positions include Gly61–Thr69, Asp203, and Ser238–Leu240.

The protein belongs to the SIMIBI class G3E GTPase family. ArgK/MeaB subfamily.

In terms of biological role, may have GTPase activity. May also bind and hydrolyze ATP. May function as chaperone. The protein is Putative GTPase CC_2483 of Caulobacter vibrioides (strain ATCC 19089 / CIP 103742 / CB 15) (Caulobacter crescentus).